The sequence spans 611 residues: Zinc metalloproteinase nas-31 (611 aa).

Residues 1-17 (MILQLLFYSLFTHLAVS) form the signal peptide. Residues 18–158 (QIDVNQALNQ…TVSTASRARR (141 aa)) constitute a propeptide that is removed on maturation. N-linked (GlcNAc...) asparagine glycosylation is found at N53 and N67. The segment covering 82–95 (NAGTNQENGATEQQ) has biased composition (polar residues). The interval 82-103 (NAGTNQENGATEQQKPLREKPR) is disordered. The Peptidase M12A domain maps to 159-354 (QAYRDRYYPS…SMMNEHYKCK (196 aa)). N200 carries an N-linked (GlcNAc...) asparagine glycan. 9 disulfide bridges follow: C203–C353, C224–C243, C357–C376, C379–C390, C397–C428, C455–C476, C532–C564, C539–C557, and C548–C561. Position 251 (H251) interacts with Zn(2+). E252 is an active-site residue. Zn(2+)-binding residues include H255 and H261. Residues 340–396 (GFYDISMMNEHYKCKELCPAASSAQCKNGGFPSPRNCAICICPSGYGGILCDQRPPG) enclose the EGF-like domain. The CUB domain maps to 397 to 516 (CGDSVTATTT…LEYRAVTPSV (120 aa)). A glycan (N-linked (GlcNAc...) asparagine) is linked at N424. Residues 532-564 (CQDLHPNCDFYKFFGMCRSKKIRSNCKFTCHDC) enclose the ShKT domain.

It depends on Zn(2+) as a cofactor. Expressed in excretory cell and in amphid and phasmid sheath glia.

The protein resides in the secreted. Its function is as follows. Metalloprotease. This chain is Zinc metalloproteinase nas-31 (nas-31), found in Caenorhabditis elegans.